We begin with the raw amino-acid sequence, 94 residues long: Acylphosphatase (94 aa).

In terms of domain architecture, Acylphosphatase-like spans Ala7–Ala94. Residues Arg22 and Asn40 contribute to the active site.

It belongs to the acylphosphatase family.

The catalysed reaction is an acyl phosphate + H2O = a carboxylate + phosphate + H(+). The chain is Acylphosphatase (acyP) from Mesorhizobium japonicum (strain LMG 29417 / CECT 9101 / MAFF 303099) (Mesorhizobium loti (strain MAFF 303099)).